The sequence spans 367 residues: Phospho-N-acetylmuramoyl-pentapeptide-transferase (367 aa).

10 consecutive transmembrane segments (helical) span residues 16-36 (LLLAAAAFVLTLIIGGWWVRF), 62-82 (TMGGIMIVSTVLILTILFNLV), 87-107 (MLLPLGVMVSFAVLGAIDDWL), 125-145 (FWIMMAVAFVASLALYLPQPY), 158-178 (VGEVNIGLWFIPIAVLIIVFI), 190-210 (SLAGWNLTLAFGAYGVITFLA), 214-234 (LTNLMAFCFTVVGACAAFLWY), 240-260 (QVFMGDLGALALGATLAVVAL), 264-284 (QWLLLPVIGIVFVVEALSTMI), and 326-346 (FVLIGTVAAMVGISLALIFGP).

Belongs to the glycosyltransferase 4 family. MraY subfamily. The cofactor is Mg(2+).

Its subcellular location is the cell membrane. It catalyses the reaction UDP-N-acetyl-alpha-D-muramoyl-L-alanyl-gamma-D-glutamyl-meso-2,6-diaminopimeloyl-D-alanyl-D-alanine + di-trans,octa-cis-undecaprenyl phosphate = di-trans,octa-cis-undecaprenyl diphospho-N-acetyl-alpha-D-muramoyl-L-alanyl-D-glutamyl-meso-2,6-diaminopimeloyl-D-alanyl-D-alanine + UMP. Its pathway is cell wall biogenesis; peptidoglycan biosynthesis. Its function is as follows. Catalyzes the initial step of the lipid cycle reactions in the biosynthesis of the cell wall peptidoglycan: transfers peptidoglycan precursor phospho-MurNAc-pentapeptide from UDP-MurNAc-pentapeptide onto the lipid carrier undecaprenyl phosphate, yielding undecaprenyl-pyrophosphoryl-MurNAc-pentapeptide, known as lipid I. This Chloroflexus aurantiacus (strain ATCC 29366 / DSM 635 / J-10-fl) protein is Phospho-N-acetylmuramoyl-pentapeptide-transferase.